Here is a 253-residue protein sequence, read N- to C-terminus: Major prion protein (253 aa).

Positions 1–22 (MANLGCWMLVLFVATWSDLGLC) are cleaved as a signal peptide. Residues 23–230 (KKRPKPGGWN…ESQAYYQRGS (208 aa)) form an interaction with GRB2, ERI3 and SYN1 region. The segment at 26–108 (PKPGGWNTGG…WNKPSKPKTS (83 aa)) is disordered. Repeat copies occupy residues 51–59 (PQGGGGWGQ), 60–67 (PHGGGWGQ), 68–75 (PHGGGWGQ), 76–83 (PHGGGWGQ), and 84–91 (PHGGGWGQ). Residues 51-91 (PQGGGGWGQPHGGGWGQPHGGGWGQPHGGGWGQPHGGGWGQ) form a 5 X 8 AA tandem repeats of P-H-G-G-G-W-G-Q region. Residues 52–95 (QGGGGWGQPHGGGWGQPHGGGWGQPHGGGWGQPHGGGWGQGGGT) are compositionally biased toward gly residues. Cu(2+) is bound by residues H61, G62, G63, H69, G70, G71, H77, G78, G79, H85, G86, and G87. An intrachain disulfide couples C179 to C214. Residues N181 and N197 are each glycosylated (N-linked (GlcNAc...) asparagine). A lipid anchor (GPI-anchor amidated serine) is attached at S230. Residues 231–253 (SMVFFSSPPVILLISFLIFLIVG) constitute a propeptide, removed in mature form.

Belongs to the prion family. As to quaternary structure, monomer and homodimer. Has a tendency to aggregate into amyloid fibrils containing a cross-beta spine, formed by a steric zipper of superposed beta-strands. Soluble oligomers may represent an intermediate stage on the path to fibril formation. Copper binding may promote oligomerization. Interacts with GRB2, APP, ERI3/PRNPIP and SYN1. Mislocalized cytosolically exposed PrP interacts with MGRN1; this interaction alters MGRN1 subcellular location and causes lysosomal enlargement. Interacts with KIAA1191.

Its subcellular location is the cell membrane. The protein resides in the golgi apparatus. Its function is as follows. Its primary physiological function is unclear. Has cytoprotective activity against internal or environmental stresses. May play a role in neuronal development and synaptic plasticity. May be required for neuronal myelin sheath maintenance. May play a role in iron uptake and iron homeostasis. Soluble oligomers are toxic to cultured neuroblastoma cells and induce apoptosis (in vitro). Association with GPC1 (via its heparan sulfate chains) targets PRNP to lipid rafts. Also provides Cu(2+) or Zn(2+) for the ascorbate-mediated GPC1 deaminase degradation of its heparan sulfate side chains. The sequence is that of Major prion protein (PRNP) from Trachypithecus francoisi (Francois' leaf monkey).